Consider the following 365-residue polypeptide: Cobalt-precorrin-5B C(1)-methyltransferase (365 aa).

The protein belongs to the CbiD family.

It catalyses the reaction Co-precorrin-5B + S-adenosyl-L-methionine = Co-precorrin-6A + S-adenosyl-L-homocysteine. It participates in cofactor biosynthesis; adenosylcobalamin biosynthesis; cob(II)yrinate a,c-diamide from sirohydrochlorin (anaerobic route): step 6/10. In terms of biological role, catalyzes the methylation of C-1 in cobalt-precorrin-5B to form cobalt-precorrin-6A. This Methanococcus maripaludis (strain C5 / ATCC BAA-1333) protein is Cobalt-precorrin-5B C(1)-methyltransferase.